A 404-amino-acid chain; its full sequence is uncharacterized protein (404 aa).

Over residues 262-278 the composition is skewed to polar residues; that stretch reads VSTGDTSPYGTEDSSPA. Disordered regions lie at residues 262-307 and 320-340; these read VSTG…SPSL and KKSH…GGAD. Phosphoserine occurs at positions 268, 276, and 279. 2 positions are modified to phosphothreonine: Thr290 and Thr293. Residues Ser304, Ser306, Ser324, Ser358, and Ser362 each carry the phosphoserine modification. A compositionally biased stretch (basic and acidic residues) spans 320-336; it reads KKSHSANDSEEFFREDD.

This is an uncharacterized protein from Rattus norvegicus (Rat).